Here is a 224-residue protein sequence, read N- to C-terminus: 7-cyano-7-deazaguanine synthase (224 aa).

ATP is bound at residue 10–20 (LSGGLDSATVV). Residues cysteine 189, cysteine 199, cysteine 202, and cysteine 205 each coordinate Zn(2+).

Belongs to the QueC family. Requires Zn(2+) as cofactor.

It carries out the reaction 7-carboxy-7-deazaguanine + NH4(+) + ATP = 7-cyano-7-deazaguanine + ADP + phosphate + H2O + H(+). It participates in purine metabolism; 7-cyano-7-deazaguanine biosynthesis. In terms of biological role, catalyzes the ATP-dependent conversion of 7-carboxy-7-deazaguanine (CDG) to 7-cyano-7-deazaguanine (preQ(0)). This Stutzerimonas stutzeri (strain A1501) (Pseudomonas stutzeri) protein is 7-cyano-7-deazaguanine synthase.